A 160-amino-acid polypeptide reads, in one-letter code: Probable dihydroneopterin aldolase 3 (160 aa).

Substrate is bound by residues Glu59, Phe91, and Tyr110–Glu111. Lys137 serves as the catalytic Proton donor/acceptor.

This sequence belongs to the DHNA family. Homooctamer. Forms a hollow cylinder assembled from two ring-shaped tetramers. In terms of tissue distribution, expressed at very low levels in siliques.

It carries out the reaction 7,8-dihydroneopterin = 6-hydroxymethyl-7,8-dihydropterin + glycolaldehyde. It functions in the pathway cofactor biosynthesis; tetrahydrofolate biosynthesis; 2-amino-4-hydroxy-6-hydroxymethyl-7,8-dihydropteridine diphosphate from 7,8-dihydroneopterin triphosphate: step 3/4. Its function is as follows. Catalyzes the conversion of 7,8-dihydroneopterin into 6-hydroxymethyl-7,8-dihydropterin, a biosynthetic precursor of the vitamin tetrahydrofolate. Can use L-threo-dihydroneopterin and D-erythro-dihydroneopterin as substrates for the formation of 6-hydroxymethyldihydropterin, but it can also catalyze the epimerization of carbon 2' of dihydroneopterin and dihydromonapterin. The sequence is that of Probable dihydroneopterin aldolase 3 from Arabidopsis thaliana (Mouse-ear cress).